The following is a 146-amino-acid chain: MYPAHLLVLLAVCVSLLGAASVPPQPLNLVQFGYLIQCANHGSRATWHYMDYGCYCGAGGSGTPVDDLDRCCKIHDDCYGDAEKKGCSPKMLAYDYYCGENGPYCKNIKKECQRFVCDCDVKAAKCFAGAPYNDANWNIDTTKHCQ.

The N-terminal stretch at 1–19 (MYPAHLLVLLAVCVSLLGA) is a signal peptide. A propeptide spanning residues 20-27 (ASVPPQPL) is cleaved from the precursor. 7 disulfides stabilise this stretch: cysteine 38–cysteine 98, cysteine 54–cysteine 145, cysteine 56–cysteine 72, cysteine 71–cysteine 126, cysteine 78–cysteine 119, cysteine 87–cysteine 112, and cysteine 105–cysteine 117. 3 residues coordinate Ca(2+): tyrosine 55, glycine 57, and glycine 59. Histidine 75 is an active-site residue. Aspartate 76 is a binding site for Ca(2+). The active site involves aspartate 120.

Belongs to the phospholipase A2 family. Group I subfamily. D49 sub-subfamily. The cofactor is Ca(2+). In terms of tissue distribution, expressed by the venom gland.

It localises to the secreted. It catalyses the reaction a 1,2-diacyl-sn-glycero-3-phosphocholine + H2O = a 1-acyl-sn-glycero-3-phosphocholine + a fatty acid + H(+). Functionally, snake venom phospholipase A2 (PLA2) that inhibits collagen-induced platelet aggregation. PLA2 catalyzes the calcium-dependent hydrolysis of the 2-acyl groups in 3-sn-phosphoglycerides. The polypeptide is Phospholipase A2 147 (Drysdalia coronoides (White-lipped snake)).